The following is a 207-amino-acid chain: Ribosomal RNA large subunit methyltransferase E (207 aa).

Residues Gly-60, Trp-62, Asp-80, Asp-96, and Asp-121 each coordinate S-adenosyl-L-methionine. The Proton acceptor role is filled by Lys-161.

The protein belongs to the class I-like SAM-binding methyltransferase superfamily. RNA methyltransferase RlmE family.

The protein localises to the cytoplasm. It carries out the reaction uridine(2552) in 23S rRNA + S-adenosyl-L-methionine = 2'-O-methyluridine(2552) in 23S rRNA + S-adenosyl-L-homocysteine + H(+). Specifically methylates the uridine in position 2552 of 23S rRNA at the 2'-O position of the ribose in the fully assembled 50S ribosomal subunit. The chain is Ribosomal RNA large subunit methyltransferase E from Pseudomonas aeruginosa (strain UCBPP-PA14).